The following is a 183-amino-acid chain: CKLF-like MARVEL transmembrane domain-containing protein 6 (183 aa).

Residue methionine 1 is modified to N-acetylmethionine. Residues 1–20 form a disordered region; sequence MENGAVYSPTTEEDPGPARG. Residues 1–39 are Cytoplasmic-facing; it reads MENGAVYSPTTEEDPGPARGPRSGLAAYCFLGRLPLLRR. A Phosphoserine modification is found at serine 8. The region spanning 33 to 160 is the MARVEL domain; the sequence is RLPLLRRVLK…DFVTMLYEKR (128 aa). A helical transmembrane segment spans residues 40–60; it reads VLKGLQLSLSLLAFICEEVVS. Residues 61–67 lie on the Extracellular side of the membrane; that stretch reads QCTLCGG. The chain crosses the membrane as a helical span at residues 68 to 88; the sequence is LYFFEFVSCSAFLLSLLILIV. Over 89 to 106 the chain is Cytoplasmic; the sequence is YCTPFYERVDTTKVKSSD. Residues 107-127 form a helical membrane-spanning segment; it reads FYITLGTGCVFLLASIIFVST. Over 128–134 the chain is Extracellular; sequence HDRTSAE. The chain crosses the membrane as a helical span at residues 135–155; that stretch reads IAAIVFGFIASFMFLLDFVTM. Residues 156 to 183 are Cytoplasmic-facing; the sequence is LYEKRQESQLRKSENTTRAEALTEPLNA. Threonine 171 carries the post-translational modification Phosphothreonine.

Belongs to the chemokine-like factor family. Interacts with PD-L1/CD274 (via transmembrane domain); the interaction is direct. Interacts with CMTM4. Interacts with CD58, ARG1, ENO1 and TMPO.

The protein localises to the cell membrane. It is found in the early endosome membrane. The protein resides in the recycling endosome membrane. Functionally, master regulator of recycling and plasma membrane expression of PD-L1/CD274, an immune inhibitory ligand critical for immune tolerance to self and antitumor immunity. Associates with both constitutive and IFNG-induced PD-L1/CD274 at recycling endosomes, where it protects PD-L1/CD274 from being targeted for lysosomal degradation, likely by preventing its ubiquitination. May stabilize PD-L1/CD274 expression on antigen presenting cells and potentiates inhibitory signaling by PDCD1/CD279, its receptor on T-cells, ultimately triggering T-cell anergy. The polypeptide is CKLF-like MARVEL transmembrane domain-containing protein 6 (CMTM6) (Pongo abelii (Sumatran orangutan)).